A 199-amino-acid polypeptide reads, in one-letter code: Urease accessory protein UreG (199 aa).

A GTP-binding site is contributed by 8 to 15 (GPVGSGKT).

Belongs to the SIMIBI class G3E GTPase family. UreG subfamily. As to quaternary structure, homodimer. UreH, UreF and UreG form a complex that acts as a GTP-hydrolysis-dependent molecular chaperone, activating the urease apoprotein by helping to assemble the nickel containing metallocenter of UreC. The UreE protein probably delivers the nickel.

The protein localises to the cytoplasm. In terms of biological role, facilitates the functional incorporation of the urease nickel metallocenter. This process requires GTP hydrolysis, probably effectuated by UreG. This chain is Urease accessory protein UreG, found in Helicobacter pylori (strain G27).